The primary structure comprises 276 residues: Probable ribose-5-phosphate isomerase 3, chloroplastic (276 aa).

A chloroplast-targeting transit peptide spans 1 to 39 (MASLSFVSSSHLTLRTPSIALRSTGSSPRTSVSFSVKAQ). S40 bears the N-acetylserine mark. The residue at position 108 (S108) is a Phosphoserine.

It belongs to the ribose 5-phosphate isomerase family. Post-translationally, phosphorylated by SRK2C.

Its subcellular location is the plastid. The protein localises to the chloroplast. It carries out the reaction aldehydo-D-ribose 5-phosphate = D-ribulose 5-phosphate. The protein operates within carbohydrate degradation; pentose phosphate pathway; D-ribose 5-phosphate from D-ribulose 5-phosphate (non-oxidative stage): step 1/1. Functionally, catalyzes the reversible conversion of ribose-5-phosphate to ribulose 5-phosphate. The polypeptide is Probable ribose-5-phosphate isomerase 3, chloroplastic (RPI3) (Arabidopsis thaliana (Mouse-ear cress)).